A 182-amino-acid chain; its full sequence is Large ribosomal subunit protein uL5m (182 aa).

The protein belongs to the universal ribosomal protein uL5 family.

The protein localises to the mitochondrion. In Reclinomonas americana, this protein is Large ribosomal subunit protein uL5m (RPL5).